The sequence spans 283 residues: MATLRAMLKNAFILFLFTLTIMAKTVFSQQCGTTGCAANLCCSRYGYCGTTDAYCGTGCRSGPCSSSTTPIPPTPSGGAGGLNADPRDTIENVVTPAFFDGIMSKVGNGCPAKGFYTRQAFIAAAQSFDAYKGTVAKREIAAMLAQFSHESGSFCYKEEIARGKYCSPSTAYPCTPGKDYYGRGPIQITWNYNYGAAGKFLGLPLLTDPDMVARSPQVAFQCAMWFWNLNVRPVLDQGFGATTRKINGGECNGRRPAAVQSRVNYYLEFCRTLGITPGANLSC.

The first 28 residues, 1–28, serve as a signal peptide directing secretion; sequence MATLRAMLKNAFILFLFTLTIMAKTVFS. One can recognise a Chitin-binding type-1 domain in the interval 29–66; sequence QQCGTTGCAANLCCSRYGYCGTTDAYCGTGCRSGPCSS. Intrachain disulfides connect cysteine 31/cysteine 42, cysteine 36/cysteine 48, cysteine 41/cysteine 55, and cysteine 59/cysteine 64. A catalytic region spans residues 88–283; the sequence is DTIENVVTPA…GITPGANLSC (196 aa). Glutamate 150 (proton donor) is an active-site residue. A glycan (N-linked (GlcNAc...) asparagine) is linked at asparagine 280.

The protein belongs to the glycosyl hydrolase 19 family. Chitinase class I subfamily.

It catalyses the reaction Random endo-hydrolysis of N-acetyl-beta-D-glucosaminide (1-&gt;4)-beta-linkages in chitin and chitodextrins.. In Arabidopsis thaliana (Mouse-ear cress), this protein is Endochitinase At2g43620.